The primary structure comprises 128 residues: Claw keratin (128 aa).

2 repeat units span residues 83 to 91 (GGYGGLGGY) and 92 to 100 (GGYGGLGGY). Residues 83–104 (GGYGGLGGYGGYGGLGGYGGYG) are 3 X 9 AA tandem repeats, Gly-rich. A 3; approximate repeat occupies 101-109 (GGYGGFGSC).

It belongs to the avian keratin family. As to expression, abundantly expressed in the claw and at a low level in feather tissue.

The polypeptide is Claw keratin (CKER1) (Gallus gallus (Chicken)).